The primary structure comprises 379 residues: Ribosomal RNA large subunit methyltransferase G (379 aa).

Belongs to the methyltransferase superfamily. RlmG family.

It localises to the cytoplasm. The catalysed reaction is guanosine(1835) in 23S rRNA + S-adenosyl-L-methionine = N(2)-methylguanosine(1835) in 23S rRNA + S-adenosyl-L-homocysteine + H(+). In terms of biological role, specifically methylates the guanine in position 1835 (m2G1835) of 23S rRNA. This chain is Ribosomal RNA large subunit methyltransferase G, found in Serratia proteamaculans (strain 568).